A 429-amino-acid chain; its full sequence is Histidinol dehydrogenase (429 aa).

Residues Tyr130, Gln191, and Asn214 each contribute to the NAD(+) site. Residues Ser237, Gln259, and His262 each coordinate substrate. Residues Gln259 and His262 each contribute to the Zn(2+) site. Residues Glu327 and His328 each act as proton acceptor in the active site. Substrate contacts are provided by His328, Asp361, Glu415, and His420. Asp361 lines the Zn(2+) pocket. His420 is a binding site for Zn(2+).

Belongs to the histidinol dehydrogenase family. It depends on Zn(2+) as a cofactor.

It catalyses the reaction L-histidinol + 2 NAD(+) + H2O = L-histidine + 2 NADH + 3 H(+). It participates in amino-acid biosynthesis; L-histidine biosynthesis; L-histidine from 5-phospho-alpha-D-ribose 1-diphosphate: step 9/9. Catalyzes the sequential NAD-dependent oxidations of L-histidinol to L-histidinaldehyde and then to L-histidine. In Neisseria meningitidis serogroup B (strain ATCC BAA-335 / MC58), this protein is Histidinol dehydrogenase.